The sequence spans 491 residues: Ketol-acid reductoisomerase (NADP(+)) (491 aa).

The KARI N-terminal Rossmann domain occupies 15-208 (AQLGKCRFMG…GGHRAGVLES (194 aa)). NADP(+) contacts are provided by residues 45 to 48 (CGAQ), arginine 68, arginine 76, serine 78, and 108 to 110 (DKQ). Histidine 132 is an active-site residue. Glycine 158 contacts NADP(+). 2 consecutive KARI C-terminal knotted domains span residues 209-344 (SFVA…TAPQ) and 345-484 (YEGK…MTDM). Positions 217, 221, 389, and 393 each coordinate Mg(2+). Serine 414 contributes to the substrate binding site.

This sequence belongs to the ketol-acid reductoisomerase family. Mg(2+) serves as cofactor.

It catalyses the reaction (2R)-2,3-dihydroxy-3-methylbutanoate + NADP(+) = (2S)-2-acetolactate + NADPH + H(+). The enzyme catalyses (2R,3R)-2,3-dihydroxy-3-methylpentanoate + NADP(+) = (S)-2-ethyl-2-hydroxy-3-oxobutanoate + NADPH + H(+). Its pathway is amino-acid biosynthesis; L-isoleucine biosynthesis; L-isoleucine from 2-oxobutanoate: step 2/4. It functions in the pathway amino-acid biosynthesis; L-valine biosynthesis; L-valine from pyruvate: step 2/4. In terms of biological role, involved in the biosynthesis of branched-chain amino acids (BCAA). Catalyzes an alkyl-migration followed by a ketol-acid reduction of (S)-2-acetolactate (S2AL) to yield (R)-2,3-dihydroxy-isovalerate. In the isomerase reaction, S2AL is rearranged via a Mg-dependent methyl migration to produce 3-hydroxy-3-methyl-2-ketobutyrate (HMKB). In the reductase reaction, this 2-ketoacid undergoes a metal-dependent reduction by NADPH to yield (R)-2,3-dihydroxy-isovalerate. The protein is Ketol-acid reductoisomerase (NADP(+)) of Shigella flexneri.